We begin with the raw amino-acid sequence, 369 residues long: 4-hydroxy-3-methylbut-2-en-1-yl diphosphate synthase (flavodoxin) (369 aa).

[4Fe-4S] cluster-binding residues include C270, C273, C305, and E312.

Belongs to the IspG family. [4Fe-4S] cluster serves as cofactor.

It carries out the reaction (2E)-4-hydroxy-3-methylbut-2-enyl diphosphate + oxidized [flavodoxin] + H2O + 2 H(+) = 2-C-methyl-D-erythritol 2,4-cyclic diphosphate + reduced [flavodoxin]. The protein operates within isoprenoid biosynthesis; isopentenyl diphosphate biosynthesis via DXP pathway; isopentenyl diphosphate from 1-deoxy-D-xylulose 5-phosphate: step 5/6. Its function is as follows. Converts 2C-methyl-D-erythritol 2,4-cyclodiphosphate (ME-2,4cPP) into 1-hydroxy-2-methyl-2-(E)-butenyl 4-diphosphate. The protein is 4-hydroxy-3-methylbut-2-en-1-yl diphosphate synthase (flavodoxin) of Pseudomonas syringae pv. tomato (strain ATCC BAA-871 / DC3000).